A 522-amino-acid chain; its full sequence is O-fucosyltransferase 38 (522 aa).

Residues 26–46 (AISLYLIFVFAFTIWVLVFSS) traverse the membrane as a helical; Signal-anchor for type II membrane protein segment. The segment covering 54 to 67 (DHTKHQQQHHRDLI) has biased composition (basic and acidic residues). Positions 54–73 (DHTKHQQQHHRDLIDSESFP) are disordered. Asn147 carries N-linked (GlcNAc...) asparagine glycosylation. Position 284-286 (284-286 (HLR)) interacts with substrate. N-linked (GlcNAc...) asparagine glycosylation is present at Asn325. The interval 475 to 496 (HKDRQGAPRRRKGPTQGIKGRA) is disordered.

The protein belongs to the glycosyltransferase GT106 family.

It is found in the membrane. It functions in the pathway glycan metabolism. The chain is O-fucosyltransferase 38 from Arabidopsis thaliana (Mouse-ear cress).